Consider the following 53-residue polypeptide: Sec-independent protein translocase protein TatA (53 aa).

A helical transmembrane segment spans residues 1–21 (MGMSFSHLLIVLLIIFVLFGA).

The protein belongs to the TatA/E family. In terms of assembly, the Tat system comprises two distinct complexes: a TatABC complex, containing multiple copies of TatA, TatB and TatC subunits, and a separate TatA complex, containing only TatA subunits. Substrates initially bind to the TatABC complex, which probably triggers association of the separate TatA complex to form the active translocon.

It is found in the cell inner membrane. Part of the twin-arginine translocation (Tat) system that transports large folded proteins containing a characteristic twin-arginine motif in their signal peptide across membranes. TatA could form the protein-conducting channel of the Tat system. This is Sec-independent protein translocase protein TatA from Rickettsia akari (strain Hartford).